Consider the following 157-residue polypeptide: Neutrophil recruitment protein (157 aa).

Positions 1 to 19 are cleaved as a signal peptide; the sequence is MCSIWLTFFLSFLILNTKA.

The protein belongs to the PBP/GOBP family. Interacts with mouse TLR1; the interaction promotes activation of canonical NF-kappa-B signaling in host macrophages. Interacts with human TLR1. Interacts with mouse TLR4; the interaction promotes activation of canonical NF-kappa-B signaling in host macrophages. Interacts with human TLR4. As to expression, female salivary gland (at protein level).

The protein localises to the secreted. In terms of biological role, activates MyD88-dependent canonical NF-kappa-B signaling in host macrophages via interaction with host TLR1 and TLR4; this drives the expression of neutrophil chemoattractants, followed by the subsequent influx of neutrophils and recruitment of myeloid cells at the bite site. Functionally, (Microbial infection) Promotes Zika virus infection in mouse model by facilitating recruitment of flavivirus-permissive myeloid cells at the bite site. Its function is as follows. (Microbial infection) Promotes dengue virus infection in mouse model by facilitating recruitment of flavivirus-permissive myeloid cells at the bite site. This is Neutrophil recruitment protein from Aedes aegypti (Yellowfever mosquito).